Here is a 269-residue protein sequence, read N- to C-terminus: Aquaporin-1 (269 aa).

At 1 to 11 (MASEIKKKLFW) the chain is on the cytoplasmic side. Residues 12 to 29 (RAVVAEFLAMTLFVFISI) form a helical membrane-spanning segment. Over 30-46 (GSALGFNYPLERNQTLV) the chain is Extracellular. A helical membrane pass occupies residues 47–65 (QDNVKVSLAFGLSIATLAQ). Residues 66-68 (SVG) are Cytoplasmic-facing. Residues 69–82 (HISGAHLNPAVTLG) lie within the membrane without spanning it. Positions 76–78 (NPA) match the NPA 1 motif. The Cytoplasmic segment spans residues 83–90 (LLLSCQIS). Residues 91 to 109 (ILRAVMYIIAQCVGAIVAT) traverse the membrane as a helical segment. The Extracellular segment spans residues 110 to 133 (AILSGITSSLVDNSLGRNDLAHGV). Residues 134–153 (NSGQGLGIEIIGTLQLVLCV) form a helical membrane-spanning segment. Over 154–163 (LATTDRRRRD) the chain is Cytoplasmic. The helical transmembrane segment at 164-181 (LGGSAPLAIGLSVALGHL) threads the bilayer. The Extracellular segment spans residues 182-186 (LAIDY). Residues 187-199 (TGCGINPARSFGS) lie within the membrane without spanning it. An NPA 2 motif is present at residues 192 to 194 (NPA). Topologically, residues 200–206 (AVLTRNF) are extracellular. A glycan (N-linked (GlcNAc...) asparagine) is linked at Asn205. Residues 207 to 224 (SNHWIFWVGPFIGGALAV) form a helical membrane-spanning segment. Topologically, residues 225–269 (LIYDFILAPRSSDFTDRMKVWTSGQVEEYDLDADDINSRVEMKPK) are cytoplasmic. Phosphoserine is present on Ser247. Position 253 is a phosphotyrosine (Tyr253). Position 262 is a phosphoserine (Ser262).

Belongs to the MIP/aquaporin (TC 1.A.8) family. As to quaternary structure, homotetramer; each monomer provides an independent water pore. Component of the ankyrin-1 complex in the erythrocyte, composed of ANK1, RHCE, RHAG, SLC4A1, EPB42, GYPA, GYPB and AQP1. Interacts with EPHB2; involved in endolymph production in the inner ear. Identified in a complex with STOM. Interacts (via the N-terminal) with ANK1 (via ANK 1-5 repeats). Interacts (via the C-terminal) with EPB42. Detected in erythrocytes (at protein level). In the kidney, expressed on luminal and basal borders of proximal tubules and in the thin limb of Henle's loop (at protein level).

It is found in the cell membrane. It catalyses the reaction H2O(in) = H2O(out). The catalysed reaction is nitric oxide(out) = nitric oxide(in). It carries out the reaction CO2(out) = CO2(in). The enzyme catalyses glycerol(in) = glycerol(out). It catalyses the reaction H2O2(out) = H2O2(in). The catalysed reaction is K(+)(in) = K(+)(out). It carries out the reaction Na(+)(in) = Na(+)(out). In terms of biological role, forms a water channel that facilitates the transport of water across cell membranes, playing a crucial role in water homeostasis in various tissues. Could also be permeable to small solutes including hydrogen peroxide, glycerol and gases such as amonnia (NH3), nitric oxide (NO) and carbon dioxide (CO2). Recruited to the ankyrin-1 complex, a multiprotein complex of the erythrocyte membrane, it could be part of a CO2 metabolon, linking facilitated diffusion of CO2 across the membrane, anion exchange of Cl(-)/HCO3(-) and interconversion of dissolved CO2 and carbonic acid in the cytosol. In vitro, it shows non-selective gated cation channel activity and may be permeable to cations like K(+) and Na(+) in vivo. The protein is Aquaporin-1 of Mus musculus (Mouse).